A 993-amino-acid chain; its full sequence is Synaptonemal complex protein 1 (993 aa).

The Mediates head to head self-assembly of N-terminal ends motif lies at 98–108 (PMSRLYSKLYK). Positions 114–117 (KKWK) match the Nuclear localization signal motif. Coiled coils occupy residues 117-172 (KVSI…LIKE) and 215-688 (IEKM…EIEN). Residues 203-359 (ETRQVYVDLN…SQLTEVKEAQ (157 aa)) form an interaction with SYCE3 region. Residues 694-788 (GKLLGEVEKA…VSLKKQLEIE (95 aa)) are required for pH-induced assembly of C-terminal ends into antiparallel tetramers. The short motif at 697 to 700 (LGEV) is the Nuclear localization signal element. Residues 764 to 808 (KIALETELSNIRNELVSLKKQLEIEKEEKEKLKMAKENTAILKDK) adopt a coiled-coil conformation. The interval 801-993 (NTAILKDKKD…RLKEAEKLFS (193 aa)) is DNA-binding. Phosphoserine is present on S820. Residues 824 to 861 (TSWKFDSKTTPSQNISRLSSSMDSGKSKDNRDNLRASA) form a disordered region. The span at 831-847 (KTTPSQNISRLSSSMDS) shows a compositional bias: polar residues. Residues 848–857 (GKSKDNRDNL) are compositionally biased toward basic and acidic residues. A Nuclear localization signal motif is present at residues 898–901 (KKRK).

In terms of assembly, structural component of synaptonemal complexes. Homotetramer that consists of an N-terminal four-helical bundle that bifurcates into two elongated C-terminal dimeric coiled coils. This tetrameric building block potentially self-assembles into a supramolecular zipper-like lattice to mediate meiotic chromosome synapsis. Self-assembly is likely initiated by local proton density at chromosome axis, which is predicted to trigger antiparallel back to back assembly of adjacent C-terminal ends into tetrameric structures that anchor to chromosomal DNA. Then the N-terminal ends are predicted to undergo cooperative antiparallel head to head assembly at the midline of synaptonemal complexes central element to form a zipper-like lattice between properly aligned homologous chromosomes. The nascent synapsis generated by SYCP1 is stabilized through interaction with central element proteins SYCE1 and SYCE2. Interacts (via tetrameric core) with SYCE3; the interaction remodels SYCP1 homotetramers to 2:1 heterotrimers with SYCE3. SYCP1/SYCE3 heterotrimers form lattice assemblies as part of the mature synaptonemal complex via both lateral and head-to-head interactions. Forms a complex with EWSR1, PRDM9, SYCP3 and REC8; complex formation is dependent of phosphorylated form of REC8 and requires PRDM9 bound to hotspot DNA; EWSR1 joins PRDM9 with the chromosomal axis through REC8. Interacts with SPO16. In terms of tissue distribution, detected in testis. Detected in spermatocytes (at protein level).

The protein resides in the nucleus. Its subcellular location is the chromosome. The protein localises to the centromere. In terms of biological role, major component of the transverse filaments of synaptonemal complexes, formed between homologous chromosomes during meiotic prophase. Required for normal assembly of the central element of the synaptonemal complexes. Required for normal centromere pairing during meiosis. Required for normal meiotic chromosome synapsis during oocyte and spermatocyte development and for normal male and female fertility. The chain is Synaptonemal complex protein 1 from Mus musculus (Mouse).